Consider the following 647-residue polypeptide: DNA ligase (647 aa).

Residues D30 to D34, S79 to M80, and E105 each bind NAD(+). K107 serves as the catalytic N6-AMP-lysine intermediate. NAD(+)-binding residues include R128, E162, and K301. The Zn(2+) site is built by C395, C398, C411, and C416. Positions K570–E647 constitute a BRCT domain.

The protein belongs to the NAD-dependent DNA ligase family. LigA subfamily. Mg(2+) serves as cofactor. Requires Mn(2+) as cofactor.

It catalyses the reaction NAD(+) + (deoxyribonucleotide)n-3'-hydroxyl + 5'-phospho-(deoxyribonucleotide)m = (deoxyribonucleotide)n+m + AMP + beta-nicotinamide D-nucleotide.. Its function is as follows. DNA ligase that catalyzes the formation of phosphodiester linkages between 5'-phosphoryl and 3'-hydroxyl groups in double-stranded DNA using NAD as a coenzyme and as the energy source for the reaction. It is essential for DNA replication and repair of damaged DNA. In Campylobacter jejuni subsp. jejuni serotype O:23/36 (strain 81-176), this protein is DNA ligase.